The sequence spans 260 residues: GTP cyclohydrolase FolE2 (260 aa).

This sequence belongs to the GTP cyclohydrolase IV family.

It carries out the reaction GTP + H2O = 7,8-dihydroneopterin 3'-triphosphate + formate + H(+). It participates in cofactor biosynthesis; 7,8-dihydroneopterin triphosphate biosynthesis; 7,8-dihydroneopterin triphosphate from GTP: step 1/1. Its function is as follows. Converts GTP to 7,8-dihydroneopterin triphosphate. The protein is GTP cyclohydrolase FolE2 of Desulfosudis oleivorans (strain DSM 6200 / JCM 39069 / Hxd3) (Desulfococcus oleovorans).